The primary structure comprises 443 residues: Ribulose bisphosphate carboxylase large chain (443 aa).

Substrate-binding residues include Asn-89 and Thr-139. Lys-141 (proton acceptor) is an active-site residue. Lys-143 lines the substrate pocket. Positions 167, 169, and 170 each coordinate Mg(2+). An N6-carboxylysine modification is found at Lys-167. His-260 acts as the Proton acceptor in catalysis. 3 residues coordinate substrate: Arg-261, His-293, and Ser-345.

It belongs to the RuBisCO large chain family. Type I subfamily. As to quaternary structure, heterohexadecamer of 8 large chains and 8 small chains; disulfide-linked. The disulfide link is formed within the large subunit homodimers. Requires Mg(2+) as cofactor. Post-translationally, the disulfide bond which can form in the large chain dimeric partners within the hexadecamer appears to be associated with oxidative stress and protein turnover.

The protein localises to the plastid. Its subcellular location is the chloroplast. The catalysed reaction is 2 (2R)-3-phosphoglycerate + 2 H(+) = D-ribulose 1,5-bisphosphate + CO2 + H2O. It catalyses the reaction D-ribulose 1,5-bisphosphate + O2 = 2-phosphoglycolate + (2R)-3-phosphoglycerate + 2 H(+). In terms of biological role, ruBisCO catalyzes two reactions: the carboxylation of D-ribulose 1,5-bisphosphate, the primary event in carbon dioxide fixation, as well as the oxidative fragmentation of the pentose substrate in the photorespiration process. Both reactions occur simultaneously and in competition at the same active site. This is Ribulose bisphosphate carboxylase large chain from Callitriche heterophylla (Large water-starwort).